Reading from the N-terminus, the 282-residue chain is NAD kinase (282 aa).

Aspartate 67 serves as the catalytic Proton acceptor. NAD(+)-binding positions include 67-68 (DG), 140-141 (NE), histidine 151, arginine 170, aspartate 172, and 183-188 (TAYNLS).

The protein belongs to the NAD kinase family. Requires a divalent metal cation as cofactor.

It localises to the cytoplasm. The enzyme catalyses NAD(+) + ATP = ADP + NADP(+) + H(+). In terms of biological role, involved in the regulation of the intracellular balance of NAD and NADP, and is a key enzyme in the biosynthesis of NADP. Catalyzes specifically the phosphorylation on 2'-hydroxyl of the adenosine moiety of NAD to yield NADP. This chain is NAD kinase, found in Halobacterium salinarum (strain ATCC 700922 / JCM 11081 / NRC-1) (Halobacterium halobium).